Consider the following 208-residue polypeptide: Small ribosomal subunit protein uS4 (208 aa).

The tract at residues 28–48 is disordered; that stretch reads YMERRPYGPGEHGRARKKQDS. Residues 95-160 enclose the S4 RNA-binding domain; sequence MRLDALVLRA…MPPFQVAAAG (66 aa).

It belongs to the universal ribosomal protein uS4 family. In terms of assembly, part of the 30S ribosomal subunit. Contacts protein S5. The interaction surface between S4 and S5 is involved in control of translational fidelity.

One of the primary rRNA binding proteins, it binds directly to 16S rRNA where it nucleates assembly of the body of the 30S subunit. In terms of biological role, with S5 and S12 plays an important role in translational accuracy. The sequence is that of Small ribosomal subunit protein uS4 from Arthrobacter sp. (strain FB24).